The chain runs to 305 residues: Carbonic anhydrase 5A, mitochondrial (305 aa).

The transit peptide at 1–38 (MLGRNTWKTSAFSFLVEQMWAPLWSRSMRPGRWCSQRS) directs the protein to the mitochondrion. Residues 39–296 (CAWQTSNNTL…LMNRKVWASF (258 aa)) enclose the Alpha-carbonic anhydrase domain. H130, H132, and H155 together coordinate Zn(2+).

This sequence belongs to the alpha-carbonic anhydrase family. Zn(2+) is required as a cofactor.

Its subcellular location is the mitochondrion. The catalysed reaction is hydrogencarbonate + H(+) = CO2 + H2O. Its activity is regulated as follows. Activated by L- and D-histidine. Activated by L- and D-phenylalanine. Activated by L-adrenaline. Inhibited by coumarins, sulfonamide derivatives such as acetazolamide and Foscarnet (phosphonoformate trisodium salt). Activated by histamine. In terms of biological role, mitochondrial carbonic anhydrase that catalyzes the reversible conversion of carbon dioxide to bicarbonate/HCO3. Mitochondria are impermeable to HCO3, and thus this intramitochondrial carbonic anhydrase is pivotal in providing HCO3 for multiple mitochondrial enzymes that catalyze the formation of essential metabolites of intermediary metabolism in the urea and Krebs cycles. In Homo sapiens (Human), this protein is Carbonic anhydrase 5A, mitochondrial.